Here is a 435-residue protein sequence, read N- to C-terminus: Adenylosuccinate synthetase (435 aa).

GTP is bound by residues 12 to 18 (GDEGKGK) and 40 to 42 (GHT). Catalysis depends on Asp13, which acts as the Proton acceptor. Positions 13 and 40 each coordinate Mg(2+). IMP contacts are provided by residues 13-16 (DEGK), 38-41 (NAGH), Thr130, Arg144, Gln224, Thr239, and Arg301. The active-site Proton donor is His41. 297-303 (TVSNRKR) contacts substrate. GTP contacts are provided by residues Arg303, 329–331 (KLD), and 411–413 (SAG).

The protein belongs to the adenylosuccinate synthetase family. Homodimer. Mg(2+) is required as a cofactor.

It is found in the cytoplasm. It catalyses the reaction IMP + L-aspartate + GTP = N(6)-(1,2-dicarboxyethyl)-AMP + GDP + phosphate + 2 H(+). Its pathway is purine metabolism; AMP biosynthesis via de novo pathway; AMP from IMP: step 1/2. In terms of biological role, plays an important role in the de novo pathway of purine nucleotide biosynthesis. Catalyzes the first committed step in the biosynthesis of AMP from IMP. This chain is Adenylosuccinate synthetase, found in Wolbachia sp. subsp. Brugia malayi (strain TRS).